The following is a 224-amino-acid chain: Phosphoglycolate phosphatase (224 aa).

The active-site Nucleophile is Asp11. Asp11, Asp13, and Asp177 together coordinate Mg(2+).

This sequence belongs to the HAD-like hydrolase superfamily. CbbY/CbbZ/Gph/YieH family. Mg(2+) serves as cofactor.

The enzyme catalyses 2-phosphoglycolate + H2O = glycolate + phosphate. The protein operates within organic acid metabolism; glycolate biosynthesis; glycolate from 2-phosphoglycolate: step 1/1. In terms of biological role, specifically catalyzes the dephosphorylation of 2-phosphoglycolate. Is involved in the dissimilation of the intracellular 2-phosphoglycolate formed during the DNA repair of 3'-phosphoglycolate ends, a major class of DNA lesions induced by oxidative stress. The protein is Phosphoglycolate phosphatase of Mannheimia succiniciproducens (strain KCTC 0769BP / MBEL55E).